Here is a 122-residue protein sequence, read N- to C-terminus: MIQTESRLEVADNTGAKSVQCIKVLGGSHRRYASVGDIIKVTIKEAAPRGRVKKGEVYSAVVVRTAKGIRRADGSLVKFDGNAAVLLNAKLEPIGTRIFGPVTRELRNEKFMKIVSLAPEVL.

Belongs to the universal ribosomal protein uL14 family. In terms of assembly, part of the 50S ribosomal subunit. Forms a cluster with proteins L3 and L19. In the 70S ribosome, L14 and L19 interact and together make contacts with the 16S rRNA in bridges B5 and B8.

Binds to 23S rRNA. Forms part of two intersubunit bridges in the 70S ribosome. The chain is Large ribosomal subunit protein uL14 from Delftia acidovorans (strain DSM 14801 / SPH-1).